The primary structure comprises 229 residues: Ribose-5-phosphate isomerase A (229 aa).

Substrate contacts are provided by residues 28–31 (TGST), 85–88 (DGAD), and 98–101 (KGRG). Glu107 serves as the catalytic Proton acceptor. Residue Lys125 coordinates substrate.

It belongs to the ribose 5-phosphate isomerase family. Homodimer.

It carries out the reaction aldehydo-D-ribose 5-phosphate = D-ribulose 5-phosphate. The protein operates within carbohydrate degradation; pentose phosphate pathway; D-ribose 5-phosphate from D-ribulose 5-phosphate (non-oxidative stage): step 1/1. Catalyzes the reversible conversion of ribose-5-phosphate to ribulose 5-phosphate. This is Ribose-5-phosphate isomerase A from Pyrococcus abyssi (strain GE5 / Orsay).